Reading from the N-terminus, the 842-residue chain is Type VI secretion system spike protein VgrG2a (842 aa).

Residues 265 to 291 form a disordered region; sequence RSGAGRPFSESRLRGHRRDARVASVSG.

Belongs to the VgrG protein family.

In terms of biological role, part of the H2 type VI secretion system (H2-T6SS) specialized secretion system, which delivers several virulence factors in both prokaryotic and eukaryotic cells during infection. May form the spike at the tip of the elongating tube formed by haemolysin co-regulated protein 2a/Hcp2a. In turn, may allow the delivery of the Tle4 antibacterial toxin to target cells where it exerts its toxicity. Also promotes the release of VgrG2b toxin to the host cell. The polypeptide is Type VI secretion system spike protein VgrG2a (Pseudomonas aeruginosa (strain ATCC 15692 / DSM 22644 / CIP 104116 / JCM 14847 / LMG 12228 / 1C / PRS 101 / PAO1)).